Reading from the N-terminus, the 490-residue chain is GTPase Der (490 aa).

2 EngA-type G domains span residues 3–166 (PVVA…MEDL) and 203–376 (IKLA…DSST). Residues 9–16 (GRPNVGKS), 56–60 (DTGGI), 118–121 (NKID), 209–216 (GRPNVGKS), 256–260 (DTAGV), and 321–324 (NKWD) each bind GTP. Residues 377-461 (RRVGTSMLTR…PIRIQFKEGE (85 aa)) enclose the KH-like domain.

This sequence belongs to the TRAFAC class TrmE-Era-EngA-EngB-Septin-like GTPase superfamily. EngA (Der) GTPase family. As to quaternary structure, associates with the 50S ribosomal subunit.

GTPase that plays an essential role in the late steps of ribosome biogenesis. This is GTPase Der from Shigella boydii serotype 18 (strain CDC 3083-94 / BS512).